Reading from the N-terminus, the 437-residue chain is Magnetosome protein MamN (437 aa).

11 consecutive transmembrane segments (helical) span residues 26-46, 53-73, 95-115, 136-156, 174-194, 229-249, 252-268, 281-301, 320-340, 358-378, and 416-436; these read LAVL…GTYT, SIYF…ALLA, WILV…NSLI, VPVI…TMIG, FIGG…LFFE, YGLI…PLKV, GWIA…LGRF, DILF…VGIL, AILL…GTSA, AAWW…LSGA, and WGLP…AVLA.

This sequence belongs to the arsenite-antimonite (ArsB) efflux (TC 2.A.45) family.

The protein resides in the magnetosome membrane. Plays a role in biomineralization; might regulate pH in the magnetosome. This chain is Magnetosome protein MamN, found in Magnetospirillum gryphiswaldense (strain DSM 6361 / JCM 21280 / NBRC 15271 / MSR-1).